Reading from the N-terminus, the 97-residue chain is Small integral membrane protein 8 (97 aa).

The segment at 1 to 24 (MSSAPEPPTFKKEPPKEKDFQSPG) is disordered. Positions 9 to 20 (TFKKEPPKEKDF) are enriched in basic and acidic residues. A helical transmembrane segment spans residues 48–67 (PVMAFGLVTLSLCVAYIGYL).

It belongs to the SMIM8 family.

It is found in the membrane. This is Small integral membrane protein 8 (SMIM8) from Pongo abelii (Sumatran orangutan).